The primary structure comprises 837 residues: A disintegrin and metalloproteinase with thrombospondin motifs 4 (837 aa).

The N-terminal stretch at 1-51 (MSQTGSHPGRGLAGRWLWGAQPCLLLPIVPLSWLVWLLLLLLASLLPSARL) is a signal peptide. The propeptide occupies 52–212 (ASPLPREEEI…PSPRPRRAKR (161 aa)). Asparagine 68 carries an N-linked (GlcNAc...) asparagine glycan. The short motif at 192–199 (PMCNVKAP) is the Cysteine switch element. Cysteine 194 is a Zn(2+) binding site. Positions 218 to 428 (RFVETLVVAD…GYGHCLLDKP (211 aa)) constitute a Peptidase M12B domain. Cystine bridges form between cysteine 293/cysteine 345, cysteine 322/cysteine 327, cysteine 339/cysteine 423, cysteine 377/cysteine 407, cysteine 449/cysteine 472, cysteine 460/cysteine 482, cysteine 467/cysteine 501, cysteine 495/cysteine 506, cysteine 532/cysteine 569, cysteine 536/cysteine 574, and cysteine 547/cysteine 559. Histidine 361 provides a ligand contact to Zn(2+). Glutamate 362 is a catalytic residue. Positions 365 and 371 each coordinate Zn(2+). The Disintegrin domain maps to 437-519 (TFPGKDYDAD…DQLQDFNIPQ (83 aa)). Positions 520–575 (AGGWGPWGPWGDCSRTCGGGVQFSSRDCTRPVPRNGGKYCEGRRTRFRSCNTEDCP) constitute a TSP type-1 domain. The spacer stretch occupies residues 686–837 (SKQSGSFRKF…LRRRPWAGRK (152 aa)).

In terms of assembly, interacts with SRPX2. Zn(2+) serves as cofactor. The precursor is cleaved by a furin endopeptidase. Post-translationally, glycosylated. Can be O-fucosylated by POFUT2 on a serine or a threonine residue found within the consensus sequence C1-X(2)-(S/T)-C2-G of the TSP type-1 repeat domains where C1 and C2 are the first and second cysteine residue of the repeat, respectively. Fucosylated repeats can then be further glycosylated by the addition of a beta-1,3-glucose residue by the glucosyltransferase, B3GALTL. Fucosylation mediates the efficient secretion of ADAMTS family members. Can also be C-glycosylated with one or two mannose molecules on tryptophan residues within the consensus sequence W-X-X-W of the TPRs, and N-glycosylated. These other glycosylations can also facilitate secretion. As to expression, expressed in brain, lung and heart. Expressed at very low level in placenta and skeletal muscles. Isoform 2: Detected in osteoarthritic synovium.

Its subcellular location is the secreted. The protein localises to the extracellular space. The protein resides in the extracellular matrix. It carries out the reaction Glutamyl endopeptidase. Bonds cleaved include 370-Thr-Glu-Gly-Glu-|-Ala-Arg-Gly-Ser-377 in the interglobular domain of mammalian aggrecan.. Its function is as follows. Cleaves aggrecan, a cartilage proteoglycan, at the '392-Glu-|-Ala-393' site and may be involved in its turnover. Also cleaves COMP. May play an important role in the destruction of aggrecan in arthritic diseases. Could be a critical factor in the exacerbation of neurodegeneration in Alzheimer disease. The sequence is that of A disintegrin and metalloproteinase with thrombospondin motifs 4 (ADAMTS4) from Homo sapiens (Human).